The primary structure comprises 932 residues: 2-oxoglutarate dehydrogenase E1 component (932 aa).

Belongs to the alpha-ketoglutarate dehydrogenase family. In terms of assembly, homodimer. Part of the 2-oxoglutarate dehydrogenase (OGDH) complex composed of E1 (2-oxoglutarate dehydrogenase), E2 (dihydrolipoamide succinyltransferase) and E3 (dihydrolipoamide dehydrogenase); the complex contains multiple copies of the three enzymatic components (E1, E2 and E3). It depends on thiamine diphosphate as a cofactor.

The catalysed reaction is N(6)-[(R)-lipoyl]-L-lysyl-[protein] + 2-oxoglutarate + H(+) = N(6)-[(R)-S(8)-succinyldihydrolipoyl]-L-lysyl-[protein] + CO2. In terms of biological role, E1 component of the 2-oxoglutarate dehydrogenase (OGDH) complex which catalyzes the decarboxylation of 2-oxoglutarate, the first step in the conversion of 2-oxoglutarate to succinyl-CoA and CO(2). This Staphylococcus aureus (strain USA300) protein is 2-oxoglutarate dehydrogenase E1 component.